The primary structure comprises 338 residues: Methionine import ATP-binding protein MetN 1 (338 aa).

The 240-residue stretch at 2 to 241 (IELHQVSKSF…AKHATTKRFV (240 aa)) folds into the ABC transporter domain. 38–45 (GYSGAGKS) lines the ATP pocket.

Belongs to the ABC transporter superfamily. Methionine importer (TC 3.A.1.24) family. As to quaternary structure, the complex is composed of two ATP-binding proteins (MetN), two transmembrane proteins (MetI) and a solute-binding protein (MetQ).

It localises to the cell membrane. The catalysed reaction is L-methionine(out) + ATP + H2O = L-methionine(in) + ADP + phosphate + H(+). It carries out the reaction D-methionine(out) + ATP + H2O = D-methionine(in) + ADP + phosphate + H(+). Part of the ABC transporter complex MetNIQ involved in methionine import. Responsible for energy coupling to the transport system. The chain is Methionine import ATP-binding protein MetN 1 from Listeria monocytogenes serovar 1/2a (strain ATCC BAA-679 / EGD-e).